The sequence spans 149 residues: Calmodulin-1 (149 aa).

Alanine 2 bears the N-acetylalanine mark. EF-hand domains lie at aspartate 8 to asparagine 43, proline 44 to aspartate 79, aspartate 81 to lysine 116, and leucine 117 to lysine 149. Ca(2+)-binding residues include aspartate 21, aspartate 23, aspartate 25, cysteine 27, glutamate 32, aspartate 57, aspartate 59, asparagine 61, threonine 63, glutamate 68, aspartate 94, aspartate 96, asparagine 98, and glutamate 105. At lysine 116 the chain carries N6,N6,N6-trimethyllysine. The Ca(2+) site is built by aspartate 130, aspartate 132, aspartate 134, glutamine 136, and glutamate 141.

The protein belongs to the calmodulin family.

Calmodulin mediates the control of a large number of enzymes, ion channels and other proteins by Ca(2+). Among the enzymes to be stimulated by the calmodulin-Ca(2+) complex are a number of protein kinases and phosphatases. The polypeptide is Calmodulin-1 (CAM81) (Petunia hybrida (Petunia)).